The chain runs to 120 residues: Dense granule protein 5 (120 aa).

Positions 1–25 (MASVKRVVVAVMIVNVLALIFVGVA) are cleaved as a signal peptide. The interval 27–59 (STRDVGSGGDDSEGARGREQQQVQQHEQNEDRS) is disordered. The helical transmembrane segment at 76-93 (AVGLAAAVVAVVSLLRLL) threads the bilayer. Residues 100–109 (AIQEESKESA) are compositionally biased toward basic and acidic residues. The segment at 100–120 (AIQEESKESATAEEEEVAEEE) is disordered. The segment covering 110–120 (TAEEEEVAEEE) has biased composition (acidic residues).

The protein localises to the secreted. The protein resides in the parasitophorous vacuole lumen. Its subcellular location is the parasitophorous vacuole membrane. It is found in the cytoplasmic vesicle. It localises to the secretory vesicle. Functionally, plays a role in the function of the cyst and parasitophorous vacuole membranes and therefore in host-parasite interactions. This is Dense granule protein 5 (GRA5) from Toxoplasma gondii.